Consider the following 179-residue polypeptide: Translationally-controlled tumor protein homolog (179 aa).

Residues 1–179 (MIIYKDIISG…WKHGLEEMKV (179 aa)) enclose the TCTP domain.

Belongs to the TCTP family.

Its subcellular location is the cytoplasm. The protein localises to the cytoskeleton. Functionally, involved in protein synthesis. Involved in microtubule stabilization. Involved in osmoadaptation. The chain is Translationally-controlled tumor protein homolog from Emericella nidulans (strain FGSC A4 / ATCC 38163 / CBS 112.46 / NRRL 194 / M139) (Aspergillus nidulans).